A 350-amino-acid chain; its full sequence is 5'-tyrosyl-DNA phosphodiesterase (350 aa).

Residues 113–117 (NIDGL) are interaction with 5' end of substrate DNA. The Mg(2+) site is built by aspartate 115 and glutamate 145. The tract at residues 219–224 (HLESMR) is interaction with 5' end of substrate DNA. Aspartate 258 functions as the Proton donor/acceptor in the catalytic mechanism. Residues 260-262 (NLR) are interaction with 5' end of substrate DNA.

It belongs to the CCR4/nocturin family. TTRAP/TDP2 subfamily. It depends on Mg(2+) as a cofactor. The cofactor is Mn(2+).

It localises to the nucleus. The protein localises to the PML body. DNA repair enzyme that can remove a variety of covalent adducts from DNA through hydrolysis of a 5'-phosphodiester bond, giving rise to DNA with a free 5' phosphate. Catalyzes the hydrolysis of dead-end complexes between DNA and the topoisomerase 2 (top2) active site tyrosine residue. Hydrolyzes 5'-phosphoglycolates on protruding 5' ends on DNA double-strand breaks (DSBs) due to DNA damage by radiation and free radicals. The protein is 5'-tyrosyl-DNA phosphodiesterase of Caenorhabditis briggsae.